A 527-amino-acid chain; its full sequence is Tubulin-specific chaperone E (527 aa).

An N-acetylserine modification is found at S2. The 45-residue stretch at 27-71 (GVVPPVAGPWLGVEWDNPERGKHDGSHEGTVYFQCRHPTGGSFIR) folds into the CAP-Gly domain. 7 LRR repeats span residues 154-175 (NIRK…IHIA), 180-200 (HLEV…SVLT), 205-226 (ALKV…RCAM), 230-252 (GLEE…DVLQ), 253-274 (TVKL…YLIA), 278-299 (RLEQ…DAGI), and 308-329 (SLKY…NELD). The region spanning 342–384 (NPLTKEDKEAETARLLIIASIGQLKTLNKCEILPEERRRAELD) is the LRRCT domain. Residue K463 is modified to N6-acetyllysine. Phosphoserine is present on S495.

It belongs to the TBCE family. Supercomplex made of cofactors A to E. Cofactors A and D function by capturing and stabilizing tubulin in a quasi-native conformation. Cofactor E binds to the cofactor D-tubulin complex; interaction with cofactor C then causes the release of tubulin polypeptides that are committed to the native state. Cofactors B and E can form a heterodimer which binds to alpha-tubulin and enhances their ability to dissociate tubulin heterodimers. Interacts with TBCD.

It is found in the cytoplasm. Its subcellular location is the cytoskeleton. Its function is as follows. Tubulin-folding protein; involved in the second step of the tubulin folding pathway and in the regulation of tubulin heterodimer dissociation. Required for correct organization of microtubule cytoskeleton and mitotic splindle, and maintenance of the neuronal microtubule network. This is Tubulin-specific chaperone E (TBCE) from Pongo abelii (Sumatran orangutan).